A 539-amino-acid chain; its full sequence is Prolyl 4-hydroxylase subunit alpha-2 (539 aa).

A signal peptide spans 1-16 (MRAVLLVCLLAGLAHA). Residue asparagine 110 is glycosylated (N-linked (GlcNAc...) asparagine). One can recognise a Fe2OG dioxygenase domain in the interval 401 to 509 (TSEELQVANY…KWVSNKWIHE (109 aa)). Fe cation contacts are provided by histidine 419, aspartate 421, and histidine 490. Lysine 500 lines the 2-oxoglutarate pocket.

The protein belongs to the P4HA family. Heterotetramer of two alpha chains and two beta chains. Exist either as a phy-2(2)/pdi-2(2) tetramer or as a phy-1/phy-2/pdi-2(2) tetramer. Fe(2+) serves as cofactor. The cofactor is L-ascorbate.

The protein localises to the endoplasmic reticulum lumen. It carries out the reaction L-prolyl-[collagen] + 2-oxoglutarate + O2 = trans-4-hydroxy-L-prolyl-[collagen] + succinate + CO2. Its function is as follows. Catalyzes the post-translational formation of 4-hydroxyproline in -Xaa-Pro-Gly- sequences in collagens and other proteins. The chain is Prolyl 4-hydroxylase subunit alpha-2 (phy-2) from Caenorhabditis elegans.